Consider the following 162-residue polypeptide: Nucleotide-binding protein AnaeK_0101 (162 aa).

It belongs to the YajQ family.

In terms of biological role, nucleotide-binding protein. This is Nucleotide-binding protein AnaeK_0101 from Anaeromyxobacter sp. (strain K).